Here is a 185-residue protein sequence, read N- to C-terminus: HTH-type transcriptional regulator Hpr (185 aa).

The 145-residue stretch at 13–157 (AMIFSQRIAQ…LIAILRNIYG (145 aa)) folds into the HTH marR-type domain. Positions 63-86 (ISEIAKFGVMHVSTAFNFSKKLEE) form a DNA-binding region, H-T-H motif.

In terms of assembly, homodimer.

In terms of biological role, negative regulator of protease production and sporulation. In Bacillus anthracis (strain CDC 684 / NRRL 3495), this protein is HTH-type transcriptional regulator Hpr.